We begin with the raw amino-acid sequence, 1142 residues long: Auxin response factor 5 (1142 aa).

Positions 148–250 form a DNA-binding region, TF-B3; sequence FCKTLTASDT…QLLLGIRRAN (103 aa). One can recognise a PB1 domain in the interval 1009 to 1093; the sequence is RTFTKVYKRG…RCIRILSPQE (85 aa). Residues 1114 to 1142 form a disordered region; sequence SSSDGVNGWRPRCDQNPGNPSIGPYDQFE.

Belongs to the ARF family. In terms of assembly, homodimers and heterodimers. In terms of tissue distribution, expressed in roots, culms, leaves and young panicles.

The protein resides in the nucleus. In terms of biological role, auxin response factors (ARFs) are transcriptional factors that bind specifically to the DNA sequence 5'-TGTCTC-3' found in the auxin-responsive promoter elements (AuxREs). In Oryza sativa subsp. japonica (Rice), this protein is Auxin response factor 5 (ARF5).